Here is a 301-residue protein sequence, read N- to C-terminus: Cutinase (301 aa).

The first 40 residues, 1-40, serve as a signal peptide directing secretion; the sequence is MAVMTPRRERSSLLSRALQVTAAAATALVTAVSLAAPAHA. Tyr-100 is a poly(ethylene terephthalate) binding site. Catalysis depends on Ser-170, which acts as the Nucleophile. Positions 171 and 195 each coordinate poly(ethylene terephthalate). Residues Asp-216 and His-248 each act as charge relay system in the active site. A disulfide bridge connects residues Cys-281 and Cys-299.

This sequence belongs to the AB hydrolase superfamily.

Its subcellular location is the secreted. The protein localises to the periplasm. It carries out the reaction a butanoate ester + H2O = an aliphatic alcohol + butanoate + H(+). The enzyme catalyses (ethylene terephthalate)(n) + H2O = (ethylene terephthalate)(n-1) + 4-[(2-hydroxyethoxy)carbonyl]benzoate + H(+). It catalyses the reaction cutin + H2O = cutin monomers.. Its activity is regulated as follows. Activated by magnesium ions. Activated by calcium ions. Inhibited by the serine hydrolase inhibitor phenylmethanesulfonyl fluoride (PMSF). Its function is as follows. Catalyzes the hydrolysis of cutin, a polyester that forms the structure of plant cuticle. Shows esterase activity towards p-nitrophenol-linked aliphatic esters (pNP-aliphatic esters). Also hydrolyzes the triglyceride triolein. Capable of degrading the plastic poly(ethylene terephthalate) (PET), the most abundant polyester plastic in the world. This chain is Cutinase, found in Thermobifida fusca (strain YX).